Reading from the N-terminus, the 685-residue chain is Probable transketolase (685 aa).

His32 contributes to the substrate binding site. Thiamine diphosphate is bound by residues His72 and 121 to 123 (GPL). Asp162 contributes to the Mg(2+) binding site. Gly163 and Asn192 together coordinate thiamine diphosphate. 2 residues coordinate Mg(2+): Asn192 and Ile194. Residues His268, Arg363, and Ser390 each coordinate substrate. A thiamine diphosphate-binding site is contributed by His268. 2 residues coordinate thiamine diphosphate: Glu422 and Phe448. Residue Glu422 is the Proton donor of the active site. Positions 472, 480, and 531 each coordinate substrate.

Belongs to the transketolase family. Homodimer. It depends on Mg(2+) as a cofactor. The cofactor is Ca(2+). Mn(2+) serves as cofactor. Co(2+) is required as a cofactor. Requires thiamine diphosphate as cofactor.

The catalysed reaction is D-sedoheptulose 7-phosphate + D-glyceraldehyde 3-phosphate = aldehydo-D-ribose 5-phosphate + D-xylulose 5-phosphate. In terms of biological role, catalyzes the transfer of a two-carbon ketol group from a ketose donor to an aldose acceptor, via a covalent intermediate with the cofactor thiamine pyrophosphate. In Schizosaccharomyces pombe (strain 972 / ATCC 24843) (Fission yeast), this protein is Probable transketolase.